Here is a 249-residue protein sequence, read N- to C-terminus: MSAPGMDKRKLSTSGDSLYEILGLPKTATGDDIKKTYRKLALKYHPDKNPDNVDAADKFKEVNRAHSILSNQTKRNIYDNYGSLGLYIAEQFGEENVNAYFVVTSPAVKAVVICCAVITGCCCCCCCCCCCNFCCGKFKPPVNESHDQYSHLNRPDGNREGNDMPTHLGQPPRLEDVDLDDVNLGAGGAPVTSQPREQAGGQPVFAMPPPSGAVGVNPFTGAPVAANENTSLNTTEQTTYTPDMVNQKY.

A Phosphoserine modification is found at S12. Position 13 is a phosphothreonine (T13). A phosphoserine mark is found at S14 and S17. A J domain is found at 15–84 (GDSLYEILGL…RNIYDNYGSL (70 aa)). At Y19 the chain carries Phosphotyrosine. Basic and acidic residues predominate over residues 146 to 162 (HDQYSHLNRPDGNREGN). Disordered stretches follow at residues 146–177 (HDQY…LEDV) and 218–249 (PFTG…NQKY). Over residues 227 to 241 (NENTSLNTTEQTTYT) the composition is skewed to polar residues.

Post-translationally, fatty acylated. Heavily palmitoylated in the cysteine string motif. Expressed in wide range of synaptic terminals: embryonic nervous system, larval neuromuscular junctions, adult visual system (neuropil of optic ganglia and terminal of R1-8 photoreceptors) and thoracic neuromuscular junctions. Also expressed in non-neuronal cells: follicle cells, spermatheca, testis and ejaculatory bulb. Low level of expression is found in many neuronal and non-neuronal tissues.

It is found in the membrane. May have an important role in presynaptic function. The protein is DnaJ homolog subfamily C member 5 homolog of Drosophila melanogaster (Fruit fly).